The following is a 1906-amino-acid chain: Serine protease/ABC transporter B family protein tagB (1906 aa).

A signal peptide spans 1 to 31 (MKFQFSSPSKIFLFSSVILILIFIGIKFELL). Residues 96-134 (INNNNNNNNKLNNNNNNNNNNNNNNNNNNNNNNNNNNNN) are disordered. One can recognise a Peptidase S8 domain in the interval 356 to 763 (PTVIFGTKDK…ASSTNPSNAI (408 aa)). Residues D387 and H432 each act as charge relay system in the active site. N-linked (GlcNAc...) asparagine glycosylation is found at N594, N621, and N672. S695 acts as the Charge relay system in catalysis. N-linked (GlcNAc...) asparagine glycans are attached at residues N747 and N823. A run of 3 helical transmembrane segments spans residues 1011–1031 (YIII…LMWI), 1076–1096 (FIIE…ASIL), and 1121–1141 (FIII…GSWI). The region spanning 1080 to 1363 (LTIATACSLV…LFGVYVSYIQ (284 aa)) is the ABC transmembrane type-1 domain. A glycan (N-linked (GlcNAc...) asparagine) is linked at N1172. The next 3 helical transmembrane spans lie at 1210–1230 (LVFI…AVPI), 1309–1329 (WLLI…LVIQ), and 1332–1352 (FTVG…DASS). Positions 1385–1455 (LEEEEADRLA…NNNNNIGNLD (71 aa)) are disordered. The span at 1396–1405 (LSGGGGGGGD) shows a compositional bias: gly residues. The segment covering 1407-1420 (GDDKKDKQNIENGK) has biased composition (basic and acidic residues). The ABC transporter domain occupies 1518 to 1756 (IEFKNVSFRY…KGKYYRMFSE (239 aa)). N1522 carries N-linked (GlcNAc...) asparagine glycosylation. 1553 to 1560 (GPSGSGKS) is an ATP binding site. N-linked (GlcNAc...) asparagine glycosylation is present at N1658. Residues 1757-1906 (DKDDTPLQNN…QMDEENDEER (150 aa)) are disordered. Composition is skewed to low complexity over residues 1765–1779 (NNNN…NNNN) and 1814–1871 (EQQE…DYDQ). The span at 1872-1886 (VPPPPPLPSESPSPP) shows a compositional bias: pro residues.

The protein in the C-terminal section; belongs to the ABC transporter superfamily. ABCB family. Multidrug resistance exporter (TC 3.A.1.201) subfamily. In the N-terminal section; belongs to the peptidase S8 family.

The protein localises to the membrane. Its function is as follows. Intercellular communication via tagB may mediate integration of cellular differentiation with morphogenesis. In Dictyostelium discoideum (Social amoeba), this protein is Serine protease/ABC transporter B family protein tagB (tagB).